The primary structure comprises 224 residues: MASSSFLLLATLLAMASWQGMASDPSPLQDFCVADMHSPVLVNGFACLNPKDVNADHFFKAAMLDTPRKTNKVGSNVTLINVMQIPGLNTLGISIARIDYAPLGQNPPHTHPRATEILTVLEGTLYVGFVTSNPDNKFFSKVLNKGDVFVFPVGLIHFQFNPNPYKPAVAIAALSSQNPGAITIANAVFGSKPPISDDVLAKAFQVEKGTIDWLQAQFWENNHY.

The first 22 residues, methionine 1–alanine 22, serve as a signal peptide directing secretion. Cysteine 32 and cysteine 47 are disulfide-bonded. The 151-residue stretch at alanine 62–aspartate 212 folds into the Cupin type-1 domain. Asparagine 76 carries N-linked (GlcNAc...) asparagine glycosylation. 4 residues coordinate Mn(2+): histidine 109, histidine 111, glutamate 116, and histidine 157.

This sequence belongs to the germin family. In terms of assembly, oligomer (believed to be a pentamer but probably hexamer).

It is found in the secreted. The protein localises to the extracellular space. The protein resides in the apoplast. Its function is as follows. Plays a role in broad-spectrum disease resistance. Probably has no oxalate oxidase activity even if the active site is conserved. This Oryza sativa subsp. japonica (Rice) protein is Germin-like protein 8-11.